The primary structure comprises 633 residues: ATP-dependent rRNA helicase SPB4 (633 aa).

The short motif at 11 to 39 is the Q motif element; the sequence is FSALTPALSEWIIDAVDAMGFVKTTPVQH. The region spanning 42-253 is the Helicase ATP-binding domain; that stretch reads IPMFMKNSDV…RVGLRNPVRI (212 aa). 55 to 62 lines the ATP pocket; it reads AVTGSGKT. Residues 119-131 show a composition bias toward acidic residues; the sequence is EPDDEDTDMEDAD. Residues 119-140 are disordered; the sequence is EPDDEDTDMEDADTPPKPTFPP. Residues 201–204 carry the DEAD box motif; the sequence is DEAD. In terms of domain architecture, Helicase C-terminal spans 292–446; it reads AMKKILSSLQ…EITVTDEDAK (155 aa). Residues 530–629 are a coiled coil; that stretch reads AYKDKAREKL…KQEAEDADFE (100 aa). 2 stretches are compositionally biased toward basic and acidic residues: residues 547-581 and 588-623; these read DKEE…EVRR and REHE…KQEA. Residues 547-633 are disordered; that stretch reads DKEEGTKKKQ…EDADFEGFSD (87 aa). A compositionally biased stretch (acidic residues) spans 624-633; it reads EDADFEGFSD.

The protein belongs to the DEAD box helicase family. DDX55/SPB4 subfamily. In terms of assembly, component of pre-60S ribosomal complexes.

It localises to the nucleus. The protein resides in the nucleolus. The enzyme catalyses ATP + H2O = ADP + phosphate + H(+). ATP-binding RNA helicase involved in the biogenesis of 60S ribosomal subunits. Binds 90S pre-ribosomal particles and dissociates from pre-60S ribosomal particles after processing of 27SB pre-rRNA. Required for the normal formation of 18S rRNA through the processing of pre-rRNAs at sites A0, A1 and A2, and the normal formation of 25S and 5.8S rRNAs through the processing of pre-rRNAs at sites C1 and C2. The protein is ATP-dependent rRNA helicase SPB4 of Phaeosphaeria nodorum (strain SN15 / ATCC MYA-4574 / FGSC 10173) (Glume blotch fungus).